The primary structure comprises 640 residues: (Z)-beta-ocimene synthase TPS13PK, chloroplastic (640 aa).

The transit peptide at 1–95 (MAALVSTVSS…PFKDEAYVKR (95 aa)) directs the protein to the chloroplast. A disordered region spans residues 50 to 69 (MSTNNNNNNNQKNSSRRSAN). The segment covering 60-69 (QKNSSRRSAN) has biased composition (polar residues). (2E)-geranyl diphosphate contacts are provided by R334, D371, D375, R515, and D518. Mg(2+)-binding residues include D371 and D375. Residues 371–375 (DDIYD) carry the DDXXD motif motif. The Mg(2+) site is built by D518, T522, and E526.

It belongs to the terpene synthase family. As to quaternary structure, monomer. It depends on Mg(2+) as a cofactor.

The protein localises to the plastid. It localises to the chloroplast. The catalysed reaction is (2E)-geranyl diphosphate = (Z)-beta-ocimene + diphosphate. The protein operates within secondary metabolite biosynthesis; terpenoid biosynthesis. Functionally, involved in monoterpene (C10) olefins biosynthesis, constituants of cannabinoids and terpenoids-rich resins. Catalyzes mainly the conversion of (2E)-geranyl diphosphate to (Z)-beta-ocimene. In Cannabis sativa (Hemp), this protein is (Z)-beta-ocimene synthase TPS13PK, chloroplastic.